The following is a 745-amino-acid chain: Aminopeptidase NAALADL1 (745 aa).

The Cytoplasmic portion of the chain corresponds to 1-6 (MHWVKI). The chain crosses the membrane as a helical; Signal-anchor for type II membrane protein span at residues 7-28 (LGVALGAAALLGLGIILGHFAI). Residues 29–745 (PKATSPLTSS…AATLVPVADL (717 aa)) are Extracellular-facing. Residues Asn128, Asn141, and Asn235 are each glycosylated (N-linked (GlcNAc...) asparagine). Positions 263 and 266 each coordinate Ca(2+). N-linked (GlcNAc...) asparagine glycans are attached at residues Asn279, Asn302, and Asn329. A disulfide bridge links Cys301 with Cys318. 2 residues coordinate Zn(2+): His373 and Asp383. Glu421 serves as the catalytic Proton donor/acceptor. Glu422 provides a ligand contact to Zn(2+). Ca(2+) is bound by residues Glu430 and Glu433. Asp450 provides a ligand contact to Zn(2+). 2 N-linked (GlcNAc...) asparagine glycosylation sites follow: Asn456 and Asn497. A Zn(2+)-binding site is contributed by His550. N-linked (GlcNAc...) asparagine glycans are attached at residues Asn593 and Asn620.

Belongs to the peptidase M28 family. M28B subfamily. In terms of assembly, homodimer. Zn(2+) is required as a cofactor. In terms of processing, N-glycosylated.

It is found in the apical cell membrane. Functionally, aminopeptidase with broad substrate specificity. Has lower activity with substrates that have Asp or Glu in the P2' position, or Pro in the P3' position. Lacks activity with substrates that have both Pro in the P3' position and Asp or Glu in the P2' position. Lacks carboxypeptidase activity. Lacks dipeptidyl-peptidase IV type activity. In Mus musculus (Mouse), this protein is Aminopeptidase NAALADL1 (Naaladl1).